The following is a 182-amino-acid chain: uncharacterized protein (182 aa).

4 helical membrane-spanning segments follow: residues 19–39 (LFGI…SIVS), 51–71 (IYLV…VVFI), 87–107 (IFTV…IELF), and 118–138 (CSPF…LAMC).

The protein resides in the membrane. This is an uncharacterized protein from Caenorhabditis elegans.